The sequence spans 196 residues: Ribosomal RNA small subunit methyltransferase G (196 aa).

S-adenosyl-L-methionine is bound by residues Gly-77, Phe-82, 127–128 (AE), and Arg-140.

This sequence belongs to the methyltransferase superfamily. RNA methyltransferase RsmG family.

Its subcellular location is the cytoplasm. Functionally, specifically methylates the N7 position of a guanine in 16S rRNA. In Aquifex aeolicus (strain VF5), this protein is Ribosomal RNA small subunit methyltransferase G.